The chain runs to 307 residues: Leucine-rich repeat-containing protein 59 (307 aa).

Met-1 bears the N-acetylmethionine mark. Thr-2 bears the N-acetylthreonine; in Leucine-rich repeat-containing protein 59, N-terminally processed mark. The Cytoplasmic segment spans residues 2–244 (TKAGSKGGNL…KPPPRKHTRS (243 aa)). 5 LRR repeats span residues 10-31 (NLRD…NEVP), 40-62 (KATV…CGLT), 63-84 (HLVK…FGRL), 86-107 (NLQH…FAQL), and 109-128 (NLKW…AKVA). Residues Ser-23 and Ser-25 each carry the phosphoserine modification. At Lys-73 the chain carries N6-succinyllysine. The residue at position 135 (Lys-135) is an N6-acetyllysine. The stretch at 148–216 (MKAVQADQER…KASKREQEKK (69 aa)) forms a coiled coil. Positions 150–241 (AVQADQERER…RPRKPPPRKH (92 aa)) are disordered. The segment covering 154 to 221 (DQERERQRRL…EQEKKPKKEA (68 aa)) has biased composition (basic and acidic residues). The span at 229–241 (SGSRPRKPPPRKH) shows a compositional bias: basic residues. A helical membrane pass occupies residues 245-265 (WAVLKVLLLLLLLCVAGGLVV). The Lumenal portion of the chain corresponds to 266–307 (CRVTGLHQQPLCTSVNTIYDNAVQGLRHHEILQWVLQTDSQQ).

Can form homodimers. Interacts with SGO1. Interacts with FGF1.

The protein localises to the microsome membrane. The protein resides in the endoplasmic reticulum membrane. Its subcellular location is the nucleus envelope. Required for nuclear import of FGF1, but not that of FGF2. Might regulate nuclear import of exogenous FGF1 by facilitating interaction with the nuclear import machinery and by transporting cytosolic FGF1 to, and possibly through, the nuclear pores. The chain is Leucine-rich repeat-containing protein 59 (Lrrc59) from Mus musculus (Mouse).